An 86-amino-acid chain; its full sequence is YcgL domain-containing protein XCV4171 (86 aa).

In terms of domain architecture, YcgL spans 1–83 (MHAYVYKSQR…PKTIVLAGEC (83 aa)).

The sequence is that of YcgL domain-containing protein XCV4171 from Xanthomonas euvesicatoria pv. vesicatoria (strain 85-10) (Xanthomonas campestris pv. vesicatoria).